A 295-amino-acid polypeptide reads, in one-letter code: Ribosomal protein L11 methyltransferase (295 aa).

4 residues coordinate S-adenosyl-L-methionine: Thr-138, Gly-161, Asp-183, and Asn-230.

It belongs to the methyltransferase superfamily. PrmA family.

It is found in the cytoplasm. It carries out the reaction L-lysyl-[protein] + 3 S-adenosyl-L-methionine = N(6),N(6),N(6)-trimethyl-L-lysyl-[protein] + 3 S-adenosyl-L-homocysteine + 3 H(+). Functionally, methylates ribosomal protein L11. This is Ribosomal protein L11 methyltransferase from Rhodopseudomonas palustris (strain BisB5).